The following is a 198-amino-acid chain: MPKIGMEPLRRRELIDAAIRTIGQRGSLDVTVAQIAHEAGVSPALAHHYFGGKDKLILATMRHLLRELGRDLNAAIKQANAPHERIAAIIAVNFSAAQFAQETIAAWLTFYVHAQQSDDIKRLLRIYARRLHSNLVFALEQLTSRARANRIAEGAGAMIDGLYIRHALGADAPDAASAIALVEDYIAIQLSGQPSAEN.

In terms of domain architecture, HTH tetR-type spans 8 to 68 (PLRRRELIDA…ATMRHLLREL (61 aa)). The H-T-H motif DNA-binding region spans 31-50 (TVAQIAHEAGVSPALAHHYF).

The protein operates within amine and polyamine biosynthesis; betaine biosynthesis via choline pathway [regulation]. In terms of biological role, repressor involved in the biosynthesis of the osmoprotectant glycine betaine. It represses transcription of the choline transporter BetT and the genes of BetAB involved in the synthesis of glycine betaine. This Brucella suis biovar 1 (strain 1330) protein is HTH-type transcriptional regulator BetI.